The following is a 437-amino-acid chain: Putative ankyrin repeat protein FPV014 (437 aa).

7 ANK repeats span residues 32 to 61, 65 to 94, 99 to 128, 131 to 160, 164 to 195, 197 to 226, and 230 to 259; these read YGCSLLHCAVENGNTEIARILLLEGANPDL, STPTALHRAVILRHYDIVNLLMEFNVDPDN, ESRTPLEYAVKLNDVKMTKTLLDYGADAED, RFNCPINDAAANGNLEICKLLIDAGARINS, GSVYTIHHAIRSGNYELVVELLSRGALPDVED, LSFSSLHHAVMEGSADMVLTLLEHGASVDV, and CGRTPLFLAANASELDIVKVLLDFWADTSV.

This Fowlpox virus (strain NVSL) (FPV) protein is Putative ankyrin repeat protein FPV014.